The sequence spans 388 residues: Ferrochelatase (388 aa).

Fe cation contacts are provided by H196 and E277.

The protein belongs to the ferrochelatase family.

The protein localises to the cytoplasm. The enzyme catalyses heme b + 2 H(+) = protoporphyrin IX + Fe(2+). It functions in the pathway porphyrin-containing compound metabolism; protoheme biosynthesis; protoheme from protoporphyrin-IX: step 1/1. In terms of biological role, catalyzes the ferrous insertion into protoporphyrin IX. In Trichormus variabilis (strain ATCC 29413 / PCC 7937) (Anabaena variabilis), this protein is Ferrochelatase.